Here is a 75-residue protein sequence, read N- to C-terminus: Small ribosomal subunit protein bS16c (75 aa).

Belongs to the bacterial ribosomal protein bS16 family.

It localises to the plastid. The protein resides in the chloroplast. This Cyanidioschyzon merolae (strain NIES-3377 / 10D) (Unicellular red alga) protein is Small ribosomal subunit protein bS16c.